The sequence spans 349 residues: Protein RecA (349 aa).

Residue 65-72 (GPESSGKT) participates in ATP binding.

This sequence belongs to the RecA family.

It is found in the cytoplasm. Can catalyze the hydrolysis of ATP in the presence of single-stranded DNA, the ATP-dependent uptake of single-stranded DNA by duplex DNA, and the ATP-dependent hybridization of homologous single-stranded DNAs. It interacts with LexA causing its activation and leading to its autocatalytic cleavage. The protein is Protein RecA of Acinetobacter baumannii (strain AB307-0294).